The sequence spans 561 residues: Potassium-transporting ATPase potassium-binding subunit (561 aa).

A run of 10 helical transmembrane segments spans residues 4-24 (IIMQ…PLGI), 65-85 (AGSV…VLML), 134-154 (GLTV…FAVI), 177-197 (LYIL…QGVV), 253-273 (FTNL…VVMF), 285-305 (AIMT…TISE), 380-400 (GLYG…LLVG), 417-437 (MVCL…AFAV), 484-504 (MVGA…ALYL), and 528-548 (FIGL…LPAL).

Belongs to the KdpA family. In terms of assembly, the system is composed of three essential subunits: KdpA, KdpB and KdpC.

The protein resides in the cell membrane. Its function is as follows. Part of the high-affinity ATP-driven potassium transport (or Kdp) system, which catalyzes the hydrolysis of ATP coupled with the electrogenic transport of potassium into the cytoplasm. This subunit binds the extracellular potassium ions and delivers the ions to the membrane domain of KdpB through an intramembrane tunnel. The polypeptide is Potassium-transporting ATPase potassium-binding subunit (Listeria welshimeri serovar 6b (strain ATCC 35897 / DSM 20650 / CCUG 15529 / CIP 8149 / NCTC 11857 / SLCC 5334 / V8)).